Here is a 183-residue protein sequence, read N- to C-terminus: ATP-dependent protease subunit HslV (183 aa).

T10 is a catalytic residue. 3 residues coordinate Na(+): A164, C167, and T170.

Belongs to the peptidase T1B family. HslV subfamily. A double ring-shaped homohexamer of HslV is capped on each side by a ring-shaped HslU homohexamer. The assembly of the HslU/HslV complex is dependent on binding of ATP.

It localises to the cytoplasm. The enzyme catalyses ATP-dependent cleavage of peptide bonds with broad specificity.. Its activity is regulated as follows. Allosterically activated by HslU binding. Protease subunit of a proteasome-like degradation complex believed to be a general protein degrading machinery. The sequence is that of ATP-dependent protease subunit HslV from Rhizorhabdus wittichii (strain DSM 6014 / CCUG 31198 / JCM 15750 / NBRC 105917 / EY 4224 / RW1) (Sphingomonas wittichii).